The sequence spans 48 residues: Photosystem II reaction center protein K (48 aa).

Residues 1 to 11 (MFLFNLEQSIG) constitute a propeptide that is removed on maturation. A helical membrane pass occupies residues 23-43 (LVDVLPIIPLLFLLLAFVWQA).

Belongs to the PsbK family. PSII is composed of 1 copy each of membrane proteins PsbA, PsbB, PsbC, PsbD, PsbE, PsbF, PsbH, PsbI, PsbJ, PsbK, PsbL, PsbM, PsbT, PsbX, PsbY, PsbZ, Psb30/Ycf12, at least 3 peripheral proteins of the oxygen-evolving complex and a large number of cofactors. It forms dimeric complexes.

Its subcellular location is the plastid. The protein localises to the chloroplast thylakoid membrane. Functionally, one of the components of the core complex of photosystem II (PSII). PSII is a light-driven water:plastoquinone oxidoreductase that uses light energy to abstract electrons from H(2)O, generating O(2) and a proton gradient subsequently used for ATP formation. It consists of a core antenna complex that captures photons, and an electron transfer chain that converts photonic excitation into a charge separation. This is Photosystem II reaction center protein K from Lepocinclis buetschlii.